The following is a 602-amino-acid chain: Arginine--tRNA ligase (602 aa).

The 'HIGH' region motif lies at 124–134 (ANPTGPVHVGR).

It belongs to the class-I aminoacyl-tRNA synthetase family.

It is found in the cytoplasm. The catalysed reaction is tRNA(Arg) + L-arginine + ATP = L-arginyl-tRNA(Arg) + AMP + diphosphate. In Halorubrum lacusprofundi (strain ATCC 49239 / DSM 5036 / JCM 8891 / ACAM 34), this protein is Arginine--tRNA ligase.